Reading from the N-terminus, the 289-residue chain is Iodotyrosine deiodinase 1 (289 aa).

Residues Met-1–Lys-21 traverse the membrane as a helical segment. Residues Asp-47 to Glu-58 are compositionally biased toward basic and acidic residues. The segment at Asp-47–Glu-69 is disordered. The span at Glu-59–Glu-69 shows a compositional bias: acidic residues. Residues Arg-100 to Arg-104, Ser-128, and Ser-128 to Gly-129 each bind FMN. Residues Ala-130, Glu-157, Tyr-161, and Lys-182 each coordinate 3,5-diiodo-L-tyrosine. Residues Ala-130, Glu-157, Tyr-161, and Lys-182 each coordinate 3-iodo-L-tyrosine. FMN contacts are provided by residues Thr-237–Thr-239 and Arg-279.

The protein belongs to the nitroreductase family. As to quaternary structure, homodimer. FMN serves as cofactor.

The protein localises to the cell membrane. It is found in the cytoplasmic vesicle membrane. The enzyme catalyses 2 iodide + L-tyrosine + 2 NADP(+) = 3,5-diiodo-L-tyrosine + 2 NADPH + H(+). The catalysed reaction is iodide + L-tyrosine + NADP(+) = 3-iodo-L-tyrosine + NADPH. It carries out the reaction 3-iodo-L-tyrosine + iodide + NADP(+) = 3,5-diiodo-L-tyrosine + NADPH + H(+). It catalyses the reaction L-tyrosine + chloride + NADP(+) = 3-chloro-L-tyrosine + NADPH. The enzyme catalyses bromide + L-tyrosine + NADP(+) = 3-bromo-L-tyrosine + NADPH. Catalyzes the dehalogenation of halotyrosines such as 3-bromo-L-tyrosine, 3-chloro-L-tyrosine, 3-iodo-L-tyrosine and 3,5-diiodo-L-tyrosine. During thyroid hormone biosynthesis, facilitates iodide salvage by catalysing the oxidative NADPH-dependent deiodination of the halogenated by-products of thyroid hormone production, monoiodotyrosine (L-MIT) and diiodotyrosine (L-DIT). The scavanged iodide can then reenter the hormone-producing pathways. Acts more efficiently on 3-iodo-L-tyrosine than 3,5-diiodo-L-tyrosine. This is Iodotyrosine deiodinase 1 (IYD) from Pongo abelii (Sumatran orangutan).